The primary structure comprises 179 residues: uncharacterized protein (179 aa).

This is an uncharacterized protein from Pasteurella multocida (strain Pm70).